A 331-amino-acid chain; its full sequence is MDPRSEVLLRQADLFQGPLLIAGAPADDLLGQLPKANAWTWHAGDQAMLDARFAGRSHYGVDVPPVAFEAAVLFLPKSRELAAYLLNALASRLGGGELYLVGEKRGGIEGAAKHLQALGKPRKLDSARHCQLWQVTVDNAPEAKPLESLAERFALELEDGPLQVVSLPGVFSHGRLDRGTALLLKHLDNLPVGHVLDFGCGAGVLGATVKRRYPQSRVTMLDVDAFAVAASRLTLAANKLEGEVISGDGIDAAPGDLSLILSNPPFHTGVHTNYQASENLLKKSGQHLRKGGEMRLVANSFLRYQPLIEGALGNCRTCAEADGFRIYQATR.

This sequence belongs to the methyltransferase superfamily. RsmC family. As to quaternary structure, monomer.

The protein localises to the cytoplasm. The catalysed reaction is guanosine(1207) in 16S rRNA + S-adenosyl-L-methionine = N(2)-methylguanosine(1207) in 16S rRNA + S-adenosyl-L-homocysteine + H(+). In terms of biological role, specifically methylates the guanine in position 1207 of 16S rRNA in the 30S particle. The polypeptide is Ribosomal RNA small subunit methyltransferase C (Pseudomonas putida (strain W619)).